Here is a 972-residue protein sequence, read N- to C-terminus: Coatomer subunit beta (972 aa).

5 HEAT repeats span residues 79 to 113, 133 to 170, 317 to 354, 397 to 434, and 481 to 518; these read LLYF…DLQH, ELLE…VSEH, GCLE…SRNI, EIAA…LYPQ, and RQSI…QAGP. A disordered region spans residues 494-522; that stretch reads LKNQRKSQDEDDEATEESATKQAGPVILP.

Oligomeric complex that consists of at least the alpha, beta, beta', gamma, delta, epsilon and zeta subunits.

The protein localises to the cytoplasm. The protein resides in the golgi apparatus membrane. It localises to the cytoplasmic vesicle. It is found in the COPI-coated vesicle membrane. Functionally, the coatomer is a cytosolic protein complex that binds to dilysine motifs and reversibly associates with Golgi non-clathrin-coated vesicles, which further mediate biosynthetic protein transport from the ER, via the Golgi up to the trans Golgi network. Coatomer complex is required for budding from Golgi membranes, and is essential for the retrograde Golgi-to-ER transport of dilysine-tagged proteins. The chain is Coatomer subunit beta from Candida glabrata (strain ATCC 2001 / BCRC 20586 / JCM 3761 / NBRC 0622 / NRRL Y-65 / CBS 138) (Yeast).